A 555-amino-acid polypeptide reads, in one-letter code: CTP synthase (555 aa).

Positions 1–272 (MQPTSTTTKH…DAYVVRKLDL (272 aa)) are amidoligase domain. Serine 19 provides a ligand contact to CTP. Serine 19 is a UTP binding site. Residues 20–25 (SLGKGL) and aspartate 77 contribute to the ATP site. Mg(2+) is bound by residues aspartate 77 and glutamate 146. Residues 153 to 155 (DIE), 193 to 198 (KTKPTQ), and lysine 229 each bind CTP. UTP-binding positions include 193-198 (KTKPTQ) and lysine 229. The 252-residue stretch at 297–548 (TVALVGKYID…VKAAVARQVA (252 aa)) folds into the Glutamine amidotransferase type-1 domain. Residue glycine 360 participates in L-glutamine binding. The Nucleophile; for glutamine hydrolysis role is filled by cysteine 387. Residues 388-391 (LGLQ), glutamate 411, and arginine 473 contribute to the L-glutamine site. Active-site residues include histidine 521 and glutamate 523.

This sequence belongs to the CTP synthase family. Homotetramer.

It carries out the reaction UTP + L-glutamine + ATP + H2O = CTP + L-glutamate + ADP + phosphate + 2 H(+). The enzyme catalyses L-glutamine + H2O = L-glutamate + NH4(+). It catalyses the reaction UTP + NH4(+) + ATP = CTP + ADP + phosphate + 2 H(+). It functions in the pathway pyrimidine metabolism; CTP biosynthesis via de novo pathway; CTP from UDP: step 2/2. With respect to regulation, allosterically activated by GTP, when glutamine is the substrate; GTP has no effect on the reaction when ammonia is the substrate. The allosteric effector GTP functions by stabilizing the protein conformation that binds the tetrahedral intermediate(s) formed during glutamine hydrolysis. Inhibited by the product CTP, via allosteric rather than competitive inhibition. Functionally, catalyzes the ATP-dependent amination of UTP to CTP with either L-glutamine or ammonia as the source of nitrogen. Regulates intracellular CTP levels through interactions with the four ribonucleotide triphosphates. The chain is CTP synthase from Streptomyces griseus subsp. griseus (strain JCM 4626 / CBS 651.72 / NBRC 13350 / KCC S-0626 / ISP 5235).